We begin with the raw amino-acid sequence, 273 residues long: 2,3,4,5-tetrahydropyridine-2,6-dicarboxylate N-succinyltransferase (273 aa).

Substrate-binding residues include R105 and D142.

It belongs to the transferase hexapeptide repeat family. As to quaternary structure, homotrimer.

The protein resides in the cytoplasm. It carries out the reaction (S)-2,3,4,5-tetrahydrodipicolinate + succinyl-CoA + H2O = (S)-2-succinylamino-6-oxoheptanedioate + CoA. It functions in the pathway amino-acid biosynthesis; L-lysine biosynthesis via DAP pathway; LL-2,6-diaminopimelate from (S)-tetrahydrodipicolinate (succinylase route): step 1/3. This is 2,3,4,5-tetrahydropyridine-2,6-dicarboxylate N-succinyltransferase from Bordetella avium (strain 197N).